Reading from the N-terminus, the 351-residue chain is MSVFLRKQCLCLGFLLLHLLNQVSATLRCPSRCPSQCPSISPTCAPGVRSVLDGCSCCPVCARQRGESCSEMRPCDQSSGLYCDRSADPNNETGICMVPEGDNCVFDGVIYRNGEKFEPNCQYHCTCRDGQIGCVPRCQLDVLLPGPDCPAPKKVAVPGECCEKWTCGSEEKGTLGGLALPAYRPEATVGVELSDSSINCIEQTTEWSACSKSCGMGLSTRVTNRNLQCEMVKQTRLCMVRPCEQEPGEATDMKGKKCLRTKKSLKSIHLQFKNCTSLYTYKPRFCGICSDGRCCTPFNTKTIQVEFQCLPGQIIKKPVMVIGTCTCHSNCPQNNEAFLQELELKTSRGEM.

Positions 1 to 21 (MSVFLRKQCLCLGFLLLHLLN) are cleaved as a signal peptide. One can recognise an IGFBP N-terminal domain in the interval 25 to 99 (ATLRCPSRCP…NNETGICMVP (75 aa)). Disulfide bonds link C29–C55, C33–C57, C37–C58, C44–C61, C69–C83, and C75–C96. An N-linked (GlcNAc...) asparagine glycan is attached at N91. In terms of domain architecture, VWFC spans 102 to 168 (DNCVFDGVIY…GECCEKWTCG (67 aa)). The region spanning 199-244 (NCIEQTTEWSACSKSCGMGLSTRVTNRNLQCEMVKQTRLCMVRPCE) is the TSP type-1 domain. The S-palmitoyl cysteine moiety is linked to residue C238. Cystine bridges form between C258/C295, C275/C309, C286/C325, C289/C327, and C294/C331. The CTCK domain maps to 258-332 (CLRTKKSLKS…GTCTCHSNCP (75 aa)). N-linked (GlcNAc...) asparagine glycosylation occurs at N274.

This sequence belongs to the CCN family. Interacts with FBLN1. Interacts (via CTCK domain) with NOTCH1 (via the EGF-like repeat region). Interacts with GJA1/CX43. Interacts with ITGA5:ITGB1, ITGAV:ITGB3 and ITGAV:ITGB5. Interacts with ZDHHC22; the interaction may lead to CCN3 palmitoylation. May be palmitoylated on Cys-238, which is important for extracellular secretion. Widely expressed. Highly expressed in neurons of dorsal root ganglia and dorsal horn of the spinal cord (at protein level). Expressed in astrocytes (at protein level). In cartilage, dominantly expressed in the chondrocyte territorial matrix.

It is found in the secreted. The protein resides in the cytoplasm. The protein localises to the cell junction. It localises to the gap junction. Immediate-early protein playing a role in various cellular processes including proliferation, adhesion, migration, differentiation and survival. Acts by binding to integrins or membrane receptors such as NOTCH1. Essential regulator of hematopoietic stem and progenitor cell function. Inhibits myogenic differentiation through the activation of Notch-signaling pathway. Inhibits vascular smooth muscle cells proliferation by increasing expression of cell-cycle regulators such as CDKN2B or CDKN1A independently of TGFB1 signaling. Ligand of integrins ITGAV:ITGB3 and ITGA5:ITGB1, acts directly upon endothelial cells to stimulate pro-angiogenic activities and induces angiogenesis. In endothelial cells, supports cell adhesion, induces directed cell migration (chemotaxis) and promotes cell survival. Also plays a role in cutaneous wound healing acting as integrin receptor ligand. Supports skin fibroblast adhesion through ITGA5:ITGB1 and ITGA6:ITGB1 and induces fibroblast chemotaxis through ITGAV:ITGB5. Seems to enhance bFGF-induced DNA synthesis in fibroblasts. Involved in bone regeneration as a negative regulator. Enhances the articular chondrocytic phenotype, whereas it repressed the one representing endochondral ossification. Impairs pancreatic beta-cell function, inhibits beta-cell proliferation and insulin secretion. Plays a role as negative regulator of endothelial pro-inflammatory activation reducing monocyte adhesion, its anti-inflammatory effects occur secondary to the inhibition of NF-kappaB signaling pathway. Contributes to the control and coordination of inflammatory processes in atherosclerosis. Attenuates inflammatory pain through regulation of IL1B- and TNF-induced MMP9, MMP2 and CCL2 expression. Inhibits MMP9 expression through ITGB1 engagement. Brain osteoanabolic hormone. During lactation, maintains the maternal skeleton and viability of offspring. The protein is CCN family member 3 (Ccn3) of Rattus norvegicus (Rat).